Here is a 352-residue protein sequence, read N- to C-terminus: MKEQLNQLSAYQPGLSPRALKEKYGIEGDLYKLASNENLYGPSPKVKEAISAHLDELYYYPETGSPTLKAAISKHLNVDQSRILFGAGLDEVILMISRAVLTPGDTIVTSEATFGQYYHNAIVESANVIQVPLKDGGFDLEGILKQVNEDTSLVWLCNPNNPTGTYFNHESLDSFLSQVPPHVPVIIDEAYFEFVTAEDYPDTLALQQKYDNAFLLRTFSKAYGLAGLRVGYVVASEHAIEKWNIIRPPFNVTRISEYAAVAALEDQQYLKEVTHKNSVERERFYQLPQSKHFLPSQTNFIFVKTKRVNELYEALLNVGCITRPFPTGVRITIGFKEQNDKMLEVLSNFKYE.

At K221 the chain carries N6-(pyridoxal phosphate)lysine.

It belongs to the class-II pyridoxal-phosphate-dependent aminotransferase family. Histidinol-phosphate aminotransferase subfamily. As to quaternary structure, homodimer. Requires pyridoxal 5'-phosphate as cofactor.

It carries out the reaction L-histidinol phosphate + 2-oxoglutarate = 3-(imidazol-4-yl)-2-oxopropyl phosphate + L-glutamate. The protein operates within amino-acid biosynthesis; L-histidine biosynthesis; L-histidine from 5-phospho-alpha-D-ribose 1-diphosphate: step 7/9. The sequence is that of Histidinol-phosphate aminotransferase from Staphylococcus aureus (strain bovine RF122 / ET3-1).